Consider the following 604-residue polypeptide: Afamin (604 aa).

Positions 1-21 (MKQLKLTGFVIFFFFLTESLT) are cleaved as a signal peptide. Albumin domains follow at residues 22 to 210 (LPTQ…EPFI), 211 to 403 (YYLK…RFNE), and 404 to 598 (TTEK…PKLA). Cystine bridges form between C77–C86, C99–C114, C113–C124, C148–C193, C192–C201, C224–C270, C269–C277, C289–C303, C302–C313, C340–C385, C384–C393, C416–C462, C461–C470, C483–C499, C498–C509, C536–C581, and C580–C589. A glycan (N-linked (GlcNAc...) asparagine) is linked at N109. Residues 215–319 (ALSSYQKNAC…RGECIIYSNK (105 aa)) are binding pocket for hydrophobic ligands. N-linked (GlcNAc...) asparagine glycosylation is present at N434.

The protein belongs to the ALB/AFP/VDB family. As to quaternary structure, forms a 1:1 complex with Wnt family members; interacts with WNT3A and WNT5A. Interacts with WNT1, WNT2B, WNT3, WNT7A, WNT7B, WNT8, WNT9A, WNT9B, WNT10A and WNT10B. In terms of processing, N-glycosylated; more than 90% of the glycans are sialylated.

The protein resides in the secreted. In terms of biological role, functions as a carrier for hydrophobic molecules in body fluids. Essential for the solubility and activity of lipidated Wnt family members, including WNT1, WNT2B, WNT3, WNT3A, WNT5A, WNT7A, WNT7B, WNT8, WNT9A, WNT9B, WNT10A and WNT10B. Binds vitamin E. May transport vitamin E in body fluids under conditions where the lipoprotein system is not sufficient. May be involved in the transport of vitamin E across the blood-brain barrier. This is Afamin (AFM) from Bos taurus (Bovine).